The sequence spans 324 residues: UDP-N-acetylenolpyruvoylglucosamine reductase (324 aa).

Residues 36-203 (FRAGGLAELM…TSVLFEGYPE (168 aa)) form the FAD-binding PCMH-type domain. The active site involves Arg183. Ser232 acts as the Proton donor in catalysis. The active site involves Glu302.

This sequence belongs to the MurB family. FAD serves as cofactor.

It localises to the cytoplasm. The enzyme catalyses UDP-N-acetyl-alpha-D-muramate + NADP(+) = UDP-N-acetyl-3-O-(1-carboxyvinyl)-alpha-D-glucosamine + NADPH + H(+). It functions in the pathway cell wall biogenesis; peptidoglycan biosynthesis. Cell wall formation. The sequence is that of UDP-N-acetylenolpyruvoylglucosamine reductase from Rhizobium etli (strain CIAT 652).